We begin with the raw amino-acid sequence, 369 residues long: Large ribosomal subunit protein uL4 (369 aa).

Thr-2 carries the N-acetylthreonine modification.

This sequence belongs to the universal ribosomal protein uL4 family.

This chain is Large ribosomal subunit protein uL4 (rpl4), found in Dictyostelium discoideum (Social amoeba).